A 328-amino-acid chain; its full sequence is Homeobox protein DLX-2 (328 aa).

2 stretches are compositionally biased toward polar residues: residues 16–28 (QIAASSTYHQHQQ) and 52–72 (ESPTLPVSTATDSSYYTNQQH). 3 disordered regions span residues 16-81 (QIAA…GGGG), 211-270 (WKSG…SSPS), and 300-328 (LHPTQTPQPHHHHHHHGGGGAPVSAGTIF). The segment at residues 152–211 (VRKPRTIYSSFQLAALQRRFQKTQYLALPERAELAASLGLTQTQVKIWFQNRRSKFKKMW) is a DNA-binding region (homeobox). S232 is modified (phosphoserine). Gly residues predominate over residues 250-264 (AGGGGPGSGGSGAGS).

This sequence belongs to the distal-less homeobox family. Interacts (via homeobox DNA-binding domain) with POU4F2; this interaction enhances retinal ganglion cell (RGC) differentiation.

Its subcellular location is the nucleus. In terms of biological role, acts as a transcriptional activator. Activates transcription of CGA/alpha-GSU, via binding to the downstream activin regulatory element (DARE) in the gene promoter. Plays a role in terminal differentiation of interneurons, such as amacrine and bipolar cells in the developing retina. Likely to play a regulatory role in the development of the ventral forebrain. May play a role in craniofacial patterning and morphogenesis. The protein is Homeobox protein DLX-2 (DLX2) of Homo sapiens (Human).